Reading from the N-terminus, the 231-residue chain is Thermonuclease (231 aa).

The first 26 residues, Met-1–Ala-26, serve as a signal peptide directing secretion. 2 consecutive propeptides follow at residues Ile-27–Ala-63 and Ser-64–Ser-82. A compositionally biased stretch (polar residues) spans Ala-61–Ser-73. Residues Ala-61 to Thr-86 form a disordered region. Residue Asp-103 coordinates Ca(2+). Residue Arg-117 is part of the active site. Asp-122 and Thr-123 together coordinate Ca(2+). Active-site residues include Glu-125 and Arg-169. Residues His-203–Leu-219 are compositionally biased toward basic and acidic residues. The segment at His-203–Gln-231 is disordered.

The protein belongs to the thermonuclease family. The cofactor is Ca(2+).

The protein resides in the secreted. It is found in the membrane. The catalysed reaction is Endonucleolytic cleavage to nucleoside 3'-phosphates and 3'-phosphooligonucleotide end-products.. In terms of biological role, enzyme that catalyzes the hydrolysis of both DNA and RNA at the 5' position of the phosphodiester bond. This Staphylococcus aureus protein is Thermonuclease.